The following is a 210-amino-acid chain: Imidazoleglycerol-phosphate dehydratase (210 aa).

The protein belongs to the imidazoleglycerol-phosphate dehydratase family.

The protein resides in the cytoplasm. The catalysed reaction is D-erythro-1-(imidazol-4-yl)glycerol 3-phosphate = 3-(imidazol-4-yl)-2-oxopropyl phosphate + H2O. It participates in amino-acid biosynthesis; L-histidine biosynthesis; L-histidine from 5-phospho-alpha-D-ribose 1-diphosphate: step 6/9. The sequence is that of Imidazoleglycerol-phosphate dehydratase from Mycobacterium marinum (strain ATCC BAA-535 / M).